The sequence spans 197 residues: Holliday junction branch migration complex subunit RuvA (197 aa).

Residues 1–63 (MFEYLNGKLV…EDAHSLYGFV (63 aa)) are domain I. The domain II stretch occupies residues 64–142 (NEAEKALFLR…ATGTVGISLL (79 aa)). The interval 142-146 (LDAGP) is flexible linker. Residues 147–197 (AGNLALEEAIEALQALGYKATELKKIEKKLAQETGLTSEEYIKSALKLMMK) are domain III.

It belongs to the RuvA family. In terms of assembly, homotetramer. Forms an RuvA(8)-RuvB(12)-Holliday junction (HJ) complex. HJ DNA is sandwiched between 2 RuvA tetramers; dsDNA enters through RuvA and exits via RuvB. An RuvB hexamer assembles on each DNA strand where it exits the tetramer. Each RuvB hexamer is contacted by two RuvA subunits (via domain III) on 2 adjacent RuvB subunits; this complex drives branch migration. In the full resolvosome a probable DNA-RuvA(4)-RuvB(12)-RuvC(2) complex forms which resolves the HJ.

It localises to the cytoplasm. In terms of biological role, the RuvA-RuvB-RuvC complex processes Holliday junction (HJ) DNA during genetic recombination and DNA repair, while the RuvA-RuvB complex plays an important role in the rescue of blocked DNA replication forks via replication fork reversal (RFR). RuvA specifically binds to HJ cruciform DNA, conferring on it an open structure. The RuvB hexamer acts as an ATP-dependent pump, pulling dsDNA into and through the RuvAB complex. HJ branch migration allows RuvC to scan DNA until it finds its consensus sequence, where it cleaves and resolves the cruciform DNA. In Lactococcus lactis subsp. lactis (strain IL1403) (Streptococcus lactis), this protein is Holliday junction branch migration complex subunit RuvA.